Here is a 111-residue protein sequence, read N- to C-terminus: TPR repeat-containing protein associated with Hsp90 (111 aa).

An N-acetylserine modification is found at Ser-2. TPR repeat units lie at residues 4–37 and 39–71; these read FEKQ…QPQN and VGYS…TSTA.

As to quaternary structure, component of the R2TP complex composed at least of RVB1, RVB2, TAH1 and PIH1. Also interacts with HSP90.

Its subcellular location is the cytoplasm. It localises to the nucleus. The chain is TPR repeat-containing protein associated with Hsp90 (TAH1) from Saccharomyces cerevisiae (strain ATCC 204508 / S288c) (Baker's yeast).